A 334-amino-acid chain; its full sequence is 4-hydroxy-2-methyl-3-oxo-4-farnesyl-3,4-dihydroquinoline-1-oxide ketoreductase (334 aa).

Tyr139 functions as the Proton donor in the catalytic mechanism.

Belongs to the 3-beta-HSD family.

It catalyses the reaction aurachin B + NAD(+) + H2O = 4-hydroxy-2-methyl-3-oxo-4-[(2E,6E)-farnesyl]-3,4-dihydroquinoline 1-oxide + NADH. The catalysed reaction is 3,4-dihydroxy-2-methyl-4-[(2E,6E)-farnesyl]-3,4-dihydroquinoline 1-oxide + NAD(+) = 4-hydroxy-2-methyl-3-oxo-4-[(2E,6E)-farnesyl]-3,4-dihydroquinoline 1-oxide + NADH + H(+). In terms of biological role, ketoreductase that catalyzes the final step in the conversion of aurachin C to aurachin B. Catalyzes the reduction of 4-hydroxy-2-methyl-3-oxo-4-[(2E,6E)-farnesyl]-3,4-dihydroquinoline-1-oxide to form 3,4-dihydroxy-2-methyl-4-[(2E,6E)-farnesyl]-3,4-dihydroquinoline 1-oxide, which then undergoes a spontaneous dehydration to form aurachin B. Accepts both NADH and NADPH, but has a preference for NADH. This is 4-hydroxy-2-methyl-3-oxo-4-farnesyl-3,4-dihydroquinoline-1-oxide ketoreductase from Stigmatella aurantiaca.